We begin with the raw amino-acid sequence, 357 residues long: Mannonate dehydratase (357 aa).

This sequence belongs to the mannonate dehydratase family. Fe(2+) is required as a cofactor. Mn(2+) serves as cofactor.

The catalysed reaction is D-mannonate = 2-dehydro-3-deoxy-D-gluconate + H2O. It functions in the pathway carbohydrate metabolism; pentose and glucuronate interconversion. Its function is as follows. Catalyzes the dehydration of D-mannonate. The polypeptide is Mannonate dehydratase (Sorangium cellulosum (strain So ce56) (Polyangium cellulosum (strain So ce56))).